We begin with the raw amino-acid sequence, 212 residues long: Large ribosomal subunit protein uL3 (212 aa).

At Q153 the chain carries N5-methylglutamine.

The protein belongs to the universal ribosomal protein uL3 family. In terms of assembly, part of the 50S ribosomal subunit. Forms a cluster with proteins L14 and L19. Methylated by PrmB.

One of the primary rRNA binding proteins, it binds directly near the 3'-end of the 23S rRNA, where it nucleates assembly of the 50S subunit. This Azoarcus sp. (strain BH72) protein is Large ribosomal subunit protein uL3.